The primary structure comprises 250 residues: Proteasome subunit alpha (250 aa).

The protein belongs to the peptidase T1A family. In terms of assembly, the 20S proteasome core is composed of 14 alpha and 14 beta subunits that assemble into four stacked heptameric rings, resulting in a barrel-shaped structure. The two inner rings, each composed of seven catalytic beta subunits, are sandwiched by two outer rings, each composed of seven alpha subunits. The catalytic chamber with the active sites is on the inside of the barrel. Has a gated structure, the ends of the cylinder being occluded by the N-termini of the alpha-subunits. Is capped at one or both ends by the proteasome regulatory ATPase, PAN.

The protein resides in the cytoplasm. Its activity is regulated as follows. The formation of the proteasomal ATPase PAN-20S proteasome complex, via the docking of the C-termini of PAN into the intersubunit pockets in the alpha-rings, triggers opening of the gate for substrate entry. Interconversion between the open-gate and close-gate conformations leads to a dynamic regulation of the 20S proteasome proteolysis activity. In terms of biological role, component of the proteasome core, a large protease complex with broad specificity involved in protein degradation. In Haloquadratum walsbyi (strain DSM 16790 / HBSQ001), this protein is Proteasome subunit alpha.